Reading from the N-terminus, the 418-residue chain is MSYYGSSYHIINADAKYPGYPPEHIIAEKRRARRRLLHKDGSCNVYFKHIFGEWGSYVVDIFTTLVDTKWRHMFVIFSLSYILSWLIFGSVFWLIAFHHGDLLNDPDITPCVDNVHSFTGAFLFSLETQTTIGYGYRCVTEECSVAVLMVILQSILSCIINTFIIGAALAKMATARKRAQTIRFSYFALIGMRDGKLCLMWRIGDFRPNHVVEGTVRAQLLRYTEDSEGRMTMAFKDLKLVNDQIILVTPVTIVHEIDHESPLYALDRKAVAKDNFEILVTFIYTGDSTGTSHQSRSSYVPREILWGHRFNDVLEVKRKYYKVNCLQFEGSVEVYAPFCSAKQLDWKDQQLHIEKAPPVRESCTSDTKARRRSFSAVAIVSSCENPEETTTSATHEYRETPYQKALLTLNRISVESQM.

The Cytoplasmic portion of the chain corresponds to 1–67 (MSYYGSSYHI…VVDIFTTLVD (67 aa)). A helical transmembrane segment spans residues 68–94 (TKWRHMFVIFSLSYILSWLIFGSVFWL). The Extracellular segment spans residues 95-117 (IAFHHGDLLNDPDITPCVDNVHS). An intramembrane region (helical; Pore-forming) is located at residues 118-134 (FTGAFLFSLETQTTIGY). The Selectivity filter motif lies at 131-136 (TIGYGY). Over 135–143 (GYRCVTEEC) the chain is Extracellular. A helical transmembrane segment spans residues 144-171 (SVAVLMVILQSILSCIINTFIIGAALAK). The Cytoplasmic portion of the chain corresponds to 172 to 418 (MATARKRAQT…LNRISVESQM (247 aa)). Phosphoserine is present on residues Ser373 and Ser375.

The protein belongs to the inward rectifier-type potassium channel (TC 1.A.2.1) family. KCNJ16 subfamily. As to quaternary structure, it forms heteromeric channels with Kir4.1/KCNJ10; this interaction is required for KCNJ16 localization to the basolateral membrane in kidney cells. As a heteromer with KCNJ10, may interact with MAGI1; this interaction may facilitate KCNJ10/KCNJ16 potassium channel expression at the basolateral membrane in kidney cells. May form heteromers with Kir2.1/KCNJ2. Can form heteromeric channels with Kir4.2/KCNJ15. Widely expressed, with highest levels in adult and fetal kidney (at protein level). In the kidney, expressed in the proximal and distal convoluted tubules, but not in glomeruli nor collecting ducts.

It localises to the membrane. It is found in the basolateral cell membrane. The catalysed reaction is K(+)(in) = K(+)(out). Its activity is regulated as follows. Channel activity is strongly regulated by variations of cytosolic pH; channels are activated by alkaline and inhibited by acidic pH values. Activated by phosphatidylinositol 4,5 biphosphate (PtdIns(4,5)P2). Functionally, inward rectifier potassium channels are characterized by a greater tendency to allow potassium to flow into the cell rather than out of it. Their voltage dependence is regulated by the concentration of extracellular potassium; as external potassium is raised, the voltage range of the channel opening shifts to more positive voltages. The inward rectification is mainly due to the blockage of outward current by internal magnesium. KCNJ16 may be involved in the regulation of fluid and pH balance. In the kidney, together with KCNJ10, mediates basolateral K(+) recycling in distal tubules; this process is critical for Na(+) reabsorption at the tubules. This Homo sapiens (Human) protein is Inward rectifier potassium channel 16 (KCNJ16).